A 703-amino-acid polypeptide reads, in one-letter code: Ubiquitin-like modifier-activating enzyme ATG7 (703 aa).

The residue at position 2 (A2) is an N-acetylalanine. Residues 15–17 (FAP) carry the FAP motif motif. K45 is covalently cross-linked (Glycyl lysine isopeptide (Lys-Gly) (interchain with G-Cter in ubiquitin)). The active-site Glycyl thioester intermediate is C572. At S698 the chain carries Phosphoserine.

The protein belongs to the ATG7 family. As to quaternary structure, homodimer. Interacts with ATG3; this interaction is essential for the transfer of ATG8-like proteins's thioester from ATG7 to ATG3 and plays a role in the conjugation of ATG12 to ATG5. Interacts with ATG12. Forms intermediate conjugates with GABARAPL1. Forms intermediate conjugates with ATG8-like proteins such as GABARAP, GABARAPL2 or MAP1LC3A. Interacts with EP300 acetyltransferase. Interacts with FOXO1. In terms of processing, acetylated by EP300. Post-translationally, polyubiquitinated on Lys-45 via 'Lys-63'-linked ubiquitin by TRIM32; this modification positiely regulates ATG8 and ATG12 activating enzyme activity leading to initiation of autophagy under metabolic stress. As to expression, widely expressed, especially in kidney, liver, lymph nodes and bone marrow.

It localises to the cytoplasm. The protein resides in the preautophagosomal structure. Its function is as follows. E1-like activating enzyme involved in the 2 ubiquitin-like systems required for cytoplasm to vacuole transport (Cvt) and autophagy. Activates ATG12 for its conjugation with ATG5 as well as the ATG8 family proteins for their conjugation with phosphatidylethanolamine. Both systems are needed for the ATG8 association to Cvt vesicles and autophagosomes membranes. Required for autophagic death induced by caspase-8 inhibition. Facilitates LC3-I lipidation with phosphatidylethanolamine to form LC3-II which is found on autophagosomal membranes. Required for mitophagy which contributes to regulate mitochondrial quantity and quality by eliminating the mitochondria to a basal level to fulfill cellular energy requirements and preventing excess ROS production. Modulates p53/TP53 activity to regulate cell cycle and survival during metabolic stress. Also plays a key role in the maintenance of axonal homeostasis, the prevention of axonal degeneration, the maintenance of hematopoietic stem cells, the formation of Paneth cell granules, as well as in adipose differentiation. Plays a role in regulating the liver clock and glucose metabolism by mediating the autophagic degradation of CRY1 (clock repressor) in a time-dependent manner. The chain is Ubiquitin-like modifier-activating enzyme ATG7 from Homo sapiens (Human).